The following is a 62-amino-acid chain: MTIAFQLAVFALIATSSILLISVPVVFASPDGWSSNKNVVFSGTSLWIGLVFLVGILNSLIS.

Helical transmembrane passes span 8–28 and 41–61; these read AVFALIATSSILLISVPVVFA and FSGTSLWIGLVFLVGILNSLI.

This sequence belongs to the PsbZ family. PSII is composed of 1 copy each of membrane proteins PsbA, PsbB, PsbC, PsbD, PsbE, PsbF, PsbH, PsbI, PsbJ, PsbK, PsbL, PsbM, PsbT, PsbY, PsbZ, Psb30/Ycf12, at least 3 peripheral proteins of the oxygen-evolving complex and a large number of cofactors. It forms dimeric complexes.

The protein localises to the plastid. It is found in the chloroplast thylakoid membrane. Its function is as follows. May control the interaction of photosystem II (PSII) cores with the light-harvesting antenna, regulates electron flow through the 2 photosystem reaction centers. PSII is a light-driven water plastoquinone oxidoreductase, using light energy to abstract electrons from H(2)O, generating a proton gradient subsequently used for ATP formation. The sequence is that of Photosystem II reaction center protein Z from Citrus sinensis (Sweet orange).